The primary structure comprises 197 residues: MARLLFRLLVESNTPSPAIDNSTAALNSDLVVILAALLCALICVLGLIAVSRCVWLRRLAAGNRTVSGSQTQSPQPPVAAANKGLKKKVLQSLPKLTFSPESPESEKFAECAICLAEFSAGDELRVLPQCGHGFHVACIDTWLGSHSSCPSCRQILVVARCHKCGGLPGSSSSGLESEPEIEIRIKQGEDDPNSFLP.

The chain crosses the membrane as a helical span at residues 30 to 50 (LVVILAALLCALICVLGLIAV). An RING-type; atypical zinc finger spans residues 111–153 (CAICLAEFSAGDELRVLPQCGHGFHVACIDTWLGSHSSCPSCR). Residues 168–197 (PGSSSSGLESEPEIEIRIKQGEDDPNSFLP) form a disordered region.

This sequence belongs to the RING-type zinc finger family. ATL subfamily.

Its subcellular location is the membrane. The catalysed reaction is S-ubiquitinyl-[E2 ubiquitin-conjugating enzyme]-L-cysteine + [acceptor protein]-L-lysine = [E2 ubiquitin-conjugating enzyme]-L-cysteine + N(6)-ubiquitinyl-[acceptor protein]-L-lysine.. It participates in protein modification; protein ubiquitination. Its function is as follows. May be involved in the early steps of the plant defense signaling pathway. The protein is RING-H2 finger protein ATL80 (ATL80) of Arabidopsis thaliana (Mouse-ear cress).